A 268-amino-acid chain; its full sequence is Syntaxin-22 (268 aa).

Residues 1-23 (MSFQDLESGRGRSTRKFNGGRQD) are disordered. An N-acetylserine modification is found at Ser-2. Residues 2 to 246 (SFQDLESGRG…AAKTQKSNSS (245 aa)) are Cytoplasmic-facing. Positions 175 to 237 (EAVIEEREQG…SQGKSQLVQA (63 aa)) constitute a t-SNARE coiled-coil homology domain. A helical; Anchor for type IV membrane protein transmembrane segment spans residues 247-267 (LTCLLLVIFGIVLLIVIIVLA). A topological domain (vesicular) is located at residue Ala-268.

It belongs to the syntaxin family. As to quaternary structure, interacts with VTI11 and SYP51 to form a t-SNARE complex, but not with VPS45. Expressed in roots, leaves, stems, flower and green siliques.

The protein resides in the prevacuolar compartment membrane. Its subcellular location is the vacuole membrane. May provide the t-SNARE function in the vacuolar assembly. Promotes the formation of vacuolar membrane 'bulbs'. Required for inflorescence stem gravitropism. The protein is Syntaxin-22 (SYP22) of Arabidopsis thaliana (Mouse-ear cress).